A 157-amino-acid polypeptide reads, in one-letter code: Endoribonuclease YbeY (157 aa).

Zn(2+) is bound by residues H114, H118, and H124.

The protein belongs to the endoribonuclease YbeY family. Zn(2+) is required as a cofactor.

The protein localises to the cytoplasm. Its function is as follows. Single strand-specific metallo-endoribonuclease involved in late-stage 70S ribosome quality control and in maturation of the 3' terminus of the 16S rRNA. The polypeptide is Endoribonuclease YbeY (Yersinia pseudotuberculosis serotype O:3 (strain YPIII)).